We begin with the raw amino-acid sequence, 500 residues long: AMP phosphorylase (500 aa).

Residues G166, 192-197, and T201 contribute to the AMP site; that span reads SRAVTS. D254 serves as the catalytic Proton donor. AMP-binding residues include S262 and K286.

Belongs to the thymidine/pyrimidine-nucleoside phosphorylase family. Type 2 subfamily.

The catalysed reaction is AMP + phosphate = alpha-D-ribose 1,5-bisphosphate + adenine. The enzyme catalyses CMP + phosphate = cytosine + alpha-D-ribose 1,5-bisphosphate. It carries out the reaction UMP + phosphate = alpha-D-ribose 1,5-bisphosphate + uracil. Catalyzes the conversion of AMP and phosphate to adenine and ribose 1,5-bisphosphate (R15P). Exhibits phosphorylase activity toward CMP and UMP in addition to AMP. Functions in an archaeal AMP degradation pathway, together with R15P isomerase and RubisCO. The sequence is that of AMP phosphorylase (deoA) from Natronomonas pharaonis (strain ATCC 35678 / DSM 2160 / CIP 103997 / JCM 8858 / NBRC 14720 / NCIMB 2260 / Gabara) (Halobacterium pharaonis).